Reading from the N-terminus, the 105-residue chain is Putative membrane protein insertion efficiency factor (105 aa).

The segment at 76–105 (GHPGGVDPVPPGPHETPRKTSTHDDEPPSR) is disordered. The segment covering 90-105 (ETPRKTSTHDDEPPSR) has biased composition (basic and acidic residues).

It belongs to the UPF0161 family.

It is found in the cell inner membrane. Could be involved in insertion of integral membrane proteins into the membrane. This chain is Putative membrane protein insertion efficiency factor, found in Chromohalobacter salexigens (strain ATCC BAA-138 / DSM 3043 / CIP 106854 / NCIMB 13768 / 1H11).